Here is a 719-residue protein sequence, read N- to C-terminus: MFTKHSVEIDWGGRPLKLETGKIARQADGAVVATYGETVVLATVVAAKAPRDGVDFLPLTVDYQEKAYAAGRIPGGYFKREGRPTEKETLVSRLIDRPIRPLFVDSWRNETQVIVTVLSHDMENDPDIVALVAASAALTLSGVPFKGPIGAARVGFANDEYILNPTLDEMADTQLDLVVAGTSDAVLMVESEAKELNEDIMLGAVMFGHRHFQPVINAIIELAEKAAKDPRDVAIIDNSAIEKEMLGIAEQDLRKAYAIAIKQERYAAVGAVKEKVMAYFFPEGQEPKYDKLRVAAVFKELEAKIVRWNILDTGKRIDGRDAKTVRNIVCEVGVLPRAHGSALFTRGETQALVVTTLGTGEDEQYIDALSGTYKETFLLHYNFPPYSVGETGRLGGTKRREIGHGKLAWRAIHPVLPPHHEFPYTTRVVSEVTESNGSSSMATVCGSSLALMDAGVPLKRPTAGIAMGLILEGSRFAVLSDILGDEDHLGDMDFKVAGTESGITSLQMDIKIEGITEEIMRVALGQAREGRIHILGEMSKALTAARAELGEYAPRIETFKIATDKIREVIGTGGKVIREIVEKTGAKVNIEDDGTVKVASSDGEAMKAAIKWIKSIASDPEVGQIYDGTVVKVMEFGAFVNFFGTRDGLVHISQLADKRVQKTTDVVKEGDKVKVKLLGFDDRGKTRLSMKVVDQTTGEDLEAKQKDAPAEAPREAAGE.

Mg(2+) contacts are provided by Asp-487 and Asp-493. The KH domain occupies Pro-554–Ile-613. The S1 motif domain maps to Gly-623 to Lys-691. Positions Lys-691 to Glu-719 are disordered. The span at Leu-701 to Glu-719 shows a compositional bias: basic and acidic residues.

It belongs to the polyribonucleotide nucleotidyltransferase family. Mg(2+) is required as a cofactor.

The protein localises to the cytoplasm. The catalysed reaction is RNA(n+1) + phosphate = RNA(n) + a ribonucleoside 5'-diphosphate. Involved in mRNA degradation. Catalyzes the phosphorolysis of single-stranded polyribonucleotides processively in the 3'- to 5'-direction. The chain is Polyribonucleotide nucleotidyltransferase from Bradyrhizobium sp. (strain ORS 278).